Consider the following 428-residue polypeptide: Stromal membrane-associated protein 2 (428 aa).

In terms of domain architecture, Arf-GAP spans 13–139 (QAVLGSLLSE…INTFRKEKDD (127 aa)). Residues 28–51 (CADCQAKGPRWASWNIGVFICIRC) form a C4-type zinc finger. Positions 161–172 (VKMPQKKEETQQ) are enriched in basic and acidic residues. Disordered stretches follow at residues 161-182 (VKMPQKKEETQQSRKSSPKSTE) and 222-258 (SRKVSGSMPTSGSAGSVPENLNLFPEPGGKGEEAGKK).

In terms of assembly, may interact with clathrin heavy chains.

GTPase activating protein. May play a role in clathrin-dependent retrograde transport from early endosomes to the trans-Golgi network. The chain is Stromal membrane-associated protein 2 (SMAP2) from Gallus gallus (Chicken).